Here is a 213-residue protein sequence, read N- to C-terminus: Putative glutathione-dependent formaldehyde-activating enzyme (213 aa).

The CENP-V/GFA domain occupies 19–165; sequence FPGGTLKCLC…FRELGLETYD (147 aa). Zn(2+) is bound by residues Cys-26, Cys-28, Cys-47, Cys-49, Cys-52, Cys-94, and Cys-97.

The protein belongs to the Gfa family. The cofactor is Zn(2+).

It catalyses the reaction S-(hydroxymethyl)glutathione = glutathione + formaldehyde. It functions in the pathway one-carbon metabolism; formaldehyde degradation; formate from formaldehyde (glutathione route): step 1/3. Catalyzes the condensation of formaldehyde and glutathione to S-hydroxymethylglutathione. This chain is Putative glutathione-dependent formaldehyde-activating enzyme, found in Podospora anserina (strain S / ATCC MYA-4624 / DSM 980 / FGSC 10383) (Pleurage anserina).